Here is a 134-residue protein sequence, read N- to C-terminus: Methylglyoxal synthase (134 aa).

An MGS-like domain is found at 1 to 134 (MKIALIAHDR…DWRLIQERRN (134 aa)). Substrate is bound by residues His8, Lys12, 34–37 (TGTT), and 54–55 (SG). Catalysis depends on Asp60, which acts as the Proton donor/acceptor. His87 contacts substrate.

It belongs to the methylglyoxal synthase family.

It carries out the reaction dihydroxyacetone phosphate = methylglyoxal + phosphate. Catalyzes the formation of methylglyoxal from dihydroxyacetone phosphate. The polypeptide is Methylglyoxal synthase (Lysinibacillus sphaericus (strain C3-41)).